Reading from the N-terminus, the 407-residue chain is MDNVLQVDSDLFPNISTNTSEPNQFVQPAWQIVLWAAAYTVIVVTSVVGNVVVMWIILAHKRMRTVTNYFLVNLAFAEASMAAFNTVVNFTYAVHNEWYYGLFYCKFHNFFPIAAVFASIYSMTAVAFDRYMAIIHPLQPRLSATATKVVICVIWVLALLLAFPQGYYSTTETMPNRVVCMIEWPEHPNKIYEKVYHICVTVLIYFLPLLVIGYAYTVVGITLWASEIPGDSSDRYHEQVSAKRKVVKMMIVVVCTFAICWLPFHIFFLLPYINPDLYLEKFIQQVYLAIMWLAMSSTMYNPIIYCCLNDRFRLGFKHAFRCCPFISAGDYEGLEMKSTRYLQTQGSVYKVSRLETTVSTVVGAHEEELEDGPKTTPSSLDLTSNGSSRSDSKTMTESFSFYSNMLS.

Over 1 to 31 (MDNVLQVDSDLFPNISTNTSEPNQFVQPAWQ) the chain is Extracellular. N-linked (GlcNAc...) asparagine glycans are attached at residues Asn14 and Asn18. The helical transmembrane segment at 32–54 (IVLWAAAYTVIVVTSVVGNVVVM) threads the bilayer. At 55-64 (WIILAHKRMR) the chain is on the cytoplasmic side. A helical transmembrane segment spans residues 65 to 86 (TVTNYFLVNLAFAEASMAAFNT). The Extracellular segment spans residues 87 to 106 (VVNFTYAVHNEWYYGLFYCK). A disulfide bond links Cys105 and Cys180. The helical transmembrane segment at 107 to 128 (FHNFFPIAAVFASIYSMTAVAF) threads the bilayer. The Cytoplasmic segment spans residues 129 to 148 (DRYMAIIHPLQPRLSATATK). A helical membrane pass occupies residues 149 to 169 (VVICVIWVLALLLAFPQGYYS). The Extracellular portion of the chain corresponds to 170 to 194 (TTETMPNRVVCMIEWPEHPNKIYEK). A helical transmembrane segment spans residues 195–219 (VYHICVTVLIYFLPLLVIGYAYTVV). Residues 220–248 (GITLWASEIPGDSSDRYHEQVSAKRKVVK) lie on the Cytoplasmic side of the membrane. Residues 249–270 (MMIVVVCTFAICWLPFHIFFLL) form a helical membrane-spanning segment. The Extracellular segment spans residues 271-283 (PYINPDLYLEKFI). The helical transmembrane segment at 284–308 (QQVYLAIMWLAMSSTMYNPIIYCCL) threads the bilayer. Residues 309 to 407 (NDRFRLGFKH…SFSFYSNMLS (99 aa)) lie on the Cytoplasmic side of the membrane. The S-palmitoyl cysteine moiety is linked to residue Cys322. The interval 365 to 394 (HEEELEDGPKTTPSSLDLTSNGSSRSDSKT) is disordered. Positions 375–394 (TTPSSLDLTSNGSSRSDSKT) are enriched in polar residues.

It belongs to the G-protein coupled receptor 1 family. Interacts with ARRB1.

It is found in the cell membrane. Its function is as follows. This is a receptor for the tachykinin neuropeptide substance P. It is probably associated with G proteins that activate a phosphatidylinositol-calcium second messenger system. In Canis lupus familiaris (Dog), this protein is Substance-P receptor (TACR1).